We begin with the raw amino-acid sequence, 376 residues long: N-glycosylase/DNA lyase (376 aa).

Positions 134, 139, and 189 each coordinate DNA. Lys-241 acts as the Schiff-base intermediate with DNA in catalysis. 8-oxoguanine contacts are provided by Pro-258 and Asp-260. His-262 contacts DNA. Residues Gln-320 and Phe-324 each coordinate 8-oxoguanine.

Belongs to the type-1 OGG1 family.

It localises to the nucleus. The enzyme catalyses 2'-deoxyribonucleotide-(2'-deoxyribose 5'-phosphate)-2'-deoxyribonucleotide-DNA = a 3'-end 2'-deoxyribonucleotide-(2,3-dehydro-2,3-deoxyribose 5'-phosphate)-DNA + a 5'-end 5'-phospho-2'-deoxyribonucleoside-DNA + H(+). DNA repair enzyme that incises DNA at 8-oxoG residues. Excises 7,8-dihydro-8-oxoguanine and 2,6-diamino-4-hydroxy-5-N-methylformamidopyrimidine (FAPY) from damaged DNA. Has a beta-lyase activity that nicks DNA 3' to the lesion. This chain is N-glycosylase/DNA lyase (OGG1), found in Saccharomyces cerevisiae (strain ATCC 204508 / S288c) (Baker's yeast).